We begin with the raw amino-acid sequence, 103 residues long: Small ribosomal subunit protein uS10 (103 aa).

It belongs to the universal ribosomal protein uS10 family. Part of the 30S ribosomal subunit.

In terms of biological role, involved in the binding of tRNA to the ribosomes. This Pelodictyon phaeoclathratiforme (strain DSM 5477 / BU-1) protein is Small ribosomal subunit protein uS10.